A 409-amino-acid chain; its full sequence is Phosphoglycerate kinase (409 aa).

Substrate-binding positions include 23 to 25, 63 to 66, Arg-120, and Arg-160; these read DIN and HQSR. ATP is bound by residues Glu-333 and 359–362; that span reads GGHL.

Belongs to the phosphoglycerate kinase family. Monomer.

It is found in the cytoplasm. The catalysed reaction is (2R)-3-phosphoglycerate + ATP = (2R)-3-phospho-glyceroyl phosphate + ADP. It functions in the pathway carbohydrate degradation; glycolysis; pyruvate from D-glyceraldehyde 3-phosphate: step 2/5. This chain is Phosphoglycerate kinase (pgk), found in Methanobacterium bryantii.